Consider the following 202-residue polypeptide: Probable nicotinate-nucleotide adenylyltransferase (202 aa).

This sequence belongs to the NadD family.

The enzyme catalyses nicotinate beta-D-ribonucleotide + ATP + H(+) = deamido-NAD(+) + diphosphate. It functions in the pathway cofactor biosynthesis; NAD(+) biosynthesis; deamido-NAD(+) from nicotinate D-ribonucleotide: step 1/1. Functionally, catalyzes the reversible adenylation of nicotinate mononucleotide (NaMN) to nicotinic acid adenine dinucleotide (NaAD). The protein is Probable nicotinate-nucleotide adenylyltransferase of Synechococcus sp. (strain JA-2-3B'a(2-13)) (Cyanobacteria bacterium Yellowstone B-Prime).